The chain runs to 253 residues: Complement C1q subcomponent subunit B (253 aa).

The N-terminal stretch at 1-27 is a signal peptide; the sequence is MMMKIPWGSIPVLMLLLLLGLIDISQA. Gln28 bears the Pyrrolidone carboxylic acid mark. Residues Pro35, Pro38, Pro41, Pro53, and Pro56 each carry the 4-hydroxyproline modification. Collagen-like domains are found at residues 37–86 and 60–114; these read IPGI…PGNP and GEKG…GESG. A disordered region spans residues 38 to 115; it reads PGIPGIPGTP…APGPKGESGD (78 aa). A 5-hydroxylysine mark is found at Lys59 and Lys62. The residue at position 65 (Pro65) is a 4-hydroxyproline. A compositionally biased stretch (basic and acidic residues) spans 70-79; the sequence is DHGEFGEKGD. Lys77 bears the 5-hydroxylysine mark. Positions 80–92 are enriched in low complexity; that stretch reads PGIPGNPGKVGPK. 4-hydroxyproline is present on residues Pro83 and Pro86. 2 positions are modified to 5-hydroxylysine: Lys92 and Lys98. Over residues 96–105 the composition is skewed to gly residues; sequence GPKGGPGAPG. A 4-hydroxyproline mark is found at Pro101, Pro104, and Pro107. 5-hydroxylysine is present on Lys110. One can recognise a C1q domain in the interval 117-253; sequence KATQKIAFSA…GFLLFPDMEA (137 aa). Cys181 and Cys198 are disulfide-bonded. Ca(2+) contacts are provided by Asp199, Tyr200, and Gln206.

Core component of the complement C1 complex, a calcium-dependent complex composed of 1 molecule of the C1Q subcomplex, 2 molecules of C1R and 2 molecules of C1S. The C1Q subcomplex is composed 18 subunits: 3 chains of C1QA, C1QB, and C1QC trimerize to form 6 collagen-like triple helices connected to six globular ligand-recognition modules (C1q domain). Hydroxylated on lysine and proline residues. Hydroxylated lysine residues can be glycosylated. Human C1Q contains up to 68.3 hydroxylysine-galactosylglucose residues and up to 2.5 hydroxylysine-galactose per molecule. Total percentage hydroxylysine residues glycosylated is 86.4%.

It is found in the secreted. The protein resides in the cell surface. Its activity is regulated as follows. The C1Q subcomplex is inhibited by sulfated molecules, such as triterpenoid sulfates, heparan sulfate, or chondroitin sulfates. In terms of biological role, core component of the complement C1 complex, a multiprotein complex that initiates the classical pathway of the complement system, a cascade of proteins that leads to phagocytosis and breakdown of pathogens and signaling that strengthens the adaptive immune system. The classical complement pathway is initiated by the C1Q subcomplex of the C1 complex, which specifically binds IgG or IgM immunoglobulins complexed with antigens, forming antigen-antibody complexes on the surface of pathogens: C1QA, together with C1QB and C1QC, specifically recognizes and binds the Fc regions of IgG or IgM via its C1q domain. Immunoglobulin-binding activates the proenzyme C1R, which cleaves C1S, initiating the proteolytic cascade of the complement system. The C1Q subcomplex is activated by a hexamer of IgG complexed with antigens, while it is activated by a pentameric IgM. The C1Q subcomplex also recognizes and binds phosphatidylserine exposed on the surface of cells undergoing programmed cell death, possibly promoting activation of the complement system. In Homo sapiens (Human), this protein is Complement C1q subcomponent subunit B.